We begin with the raw amino-acid sequence, 1070 residues long: DNA-directed RNA polymerase subunit beta (1070 aa).

This sequence belongs to the RNA polymerase beta chain family. As to quaternary structure, in plastids the minimal PEP RNA polymerase catalytic core is composed of four subunits: alpha, beta, beta', and beta''. When a (nuclear-encoded) sigma factor is associated with the core the holoenzyme is formed, which can initiate transcription.

It localises to the plastid. It is found in the chloroplast. It catalyses the reaction RNA(n) + a ribonucleoside 5'-triphosphate = RNA(n+1) + diphosphate. In terms of biological role, DNA-dependent RNA polymerase catalyzes the transcription of DNA into RNA using the four ribonucleoside triphosphates as substrates. The chain is DNA-directed RNA polymerase subunit beta from Solanum lycopersicum (Tomato).